Reading from the N-terminus, the 273-residue chain is Undecaprenyl-diphosphatase (273 aa).

The next 8 helical transmembrane spans lie at 13-35 (GLVE…VFGN), 45-62 (VFEI…VFEY), 82-102 (FVLN…LFGK), 108-128 (LFNP…ILWV), 144-164 (ALRP…LIPG), 186-206 (TEFS…YDVL), 219-239 (LILI…KALL), and 250-270 (FAYY…SGWI).

The protein belongs to the UppP family.

It is found in the cell inner membrane. It carries out the reaction di-trans,octa-cis-undecaprenyl diphosphate + H2O = di-trans,octa-cis-undecaprenyl phosphate + phosphate + H(+). Its function is as follows. Catalyzes the dephosphorylation of undecaprenyl diphosphate (UPP). Confers resistance to bacitracin. In Neisseria meningitidis serogroup C (strain 053442), this protein is Undecaprenyl-diphosphatase.